We begin with the raw amino-acid sequence, 92 residues long: Large ribosomal subunit protein bL28 (92 aa).

The interval Met-1–Ile-34 is disordered.

The protein belongs to the bacterial ribosomal protein bL28 family.

The chain is Large ribosomal subunit protein bL28 from Borrelia turicatae (strain 91E135).